The primary structure comprises 207 residues: ATP synthase subunit b 2 (207 aa).

The helical transmembrane segment at 58-78 (LLWLVITFGVFYLLMQKVIAP) threads the bilayer.

Belongs to the ATPase B chain family. F-type ATPases have 2 components, F(1) - the catalytic core - and F(0) - the membrane proton channel. F(1) has five subunits: alpha(3), beta(3), gamma(1), delta(1), epsilon(1). F(0) has three main subunits: a(1), b(2) and c(10-14). The alpha and beta chains form an alternating ring which encloses part of the gamma chain. F(1) is attached to F(0) by a central stalk formed by the gamma and epsilon chains, while a peripheral stalk is formed by the delta and b chains.

The protein localises to the cell inner membrane. Functionally, f(1)F(0) ATP synthase produces ATP from ADP in the presence of a proton or sodium gradient. F-type ATPases consist of two structural domains, F(1) containing the extramembraneous catalytic core and F(0) containing the membrane proton channel, linked together by a central stalk and a peripheral stalk. During catalysis, ATP synthesis in the catalytic domain of F(1) is coupled via a rotary mechanism of the central stalk subunits to proton translocation. Component of the F(0) channel, it forms part of the peripheral stalk, linking F(1) to F(0). The b'-subunit is a diverged and duplicated form of b found in plants and photosynthetic bacteria. The chain is ATP synthase subunit b 2 (atpF2) from Rhizobium johnstonii (strain DSM 114642 / LMG 32736 / 3841) (Rhizobium leguminosarum bv. viciae).